We begin with the raw amino-acid sequence, 255 residues long: Enkurin (255 aa).

Polar residues predominate over residues 1-10 (MDSPCTSESI). Disordered regions lie at residues 1 to 25 (MDSP…PQHP) and 67 to 96 (SKEK…DHPV). Residues 73–83 (PPKKKFNRCSP) are compositionally biased toward basic residues. Positions 83-89 (PKKPAVP) match the SH3-binding motif. One can recognise an Enkurin domain in the interval 160–252 (KRNEDVKKAQ…VIEKHKIIYI (93 aa)). The tract at residues 160–255 (KRNEDVKKAQ…KHKIIYIANK (96 aa)) is interaction with TRPC proteins. In terms of domain architecture, IQ spans 176 to 187 (IQENLKKAAMKR).

As to quaternary structure, microtubule inner protein component of sperm flagellar doublet microtubules. Binds calmodulin via its IQ domain. Interacts with TRPC1, TRPC2, TRPC5, but not TRPC3. Interacts with CFAP45. In terms of tissue distribution, high expression in testis and vomeronasal organ and lower expression in ovary, heart, lung, and brain. Not expressed in other tissues.

The protein resides in the cytoplasm. It localises to the cytoskeleton. The protein localises to the cilium axoneme. It is found in the flagellum axoneme. Adapter that functions to localize a calcium-sensitive signal transduction machinery in sperm to a calcium-permeable ion channel. Microtubule inner protein (MIP) part of the dynein-decorated doublet microtubules (DMTs) in cilia axoneme, which is required for motile cilia beating. This is Enkurin (Enkur) from Mus musculus (Mouse).